Reading from the N-terminus, the 121-residue chain is Large ribosomal subunit protein bL20 (121 aa).

Belongs to the bacterial ribosomal protein bL20 family.

Its function is as follows. Binds directly to 23S ribosomal RNA and is necessary for the in vitro assembly process of the 50S ribosomal subunit. It is not involved in the protein synthesizing functions of that subunit. This Polynucleobacter necessarius subsp. necessarius (strain STIR1) protein is Large ribosomal subunit protein bL20.